The chain runs to 837 residues: Tuftelin-interacting protein 11 (837 aa).

Composition is skewed to basic and acidic residues over residues 1–13 (MSLS…GEGR) and 53–64 (VWAERDSDDERP). 3 disordered regions span residues 1-21 (MSLS…DDER), 53-72 (VWAE…KRAR), and 85-133 (LKKG…KGFA). Positions 1–50 (MSLSHLYRDGEGRIDDDDDERENFEITDWDLQNEFNPNRQRHWQTKEEAT) are required for interaction with DHX15. A phosphoserine mark is found at Ser2, Ser59, and Ser98. A compositionally biased stretch (acidic residues) spans 91 to 102 (EEAELEDSDDEE). The span at 103 to 116 (RPVKQDDFPKDFGP) shows a compositional bias: basic and acidic residues. At Ser144 the chain carries Phosphoserine. In terms of domain architecture, G-patch spans 149-195 (TKGIGQKLLQKMGYVPGRGLGKNAQGIINPIEAKQRKGKGAVGAYGS). A disordered region spans residues 179 to 236 (IEAKQRKGKGAVGAYGSERTTQSMQDFPVVDSEEEAEEEFQKELSQWRKDPSGSKKKP). A Phosphoserine modification is found at Ser210. Over residues 217-231 (EFQKELSQWRKDPSG) the composition is skewed to basic and acidic residues. The Nuclear localization signal motif lies at 700-705 (VKDKFN). Residues 710–734 (IMNRAVSSNVGAYMQPGARENIAYL) form a required for nuclear speckle localization region.

Belongs to the TFP11/STIP family. In terms of assembly, identified in the spliceosome C complex. Found in the Intron Large (IL) complex, a post-mRNA release spliceosomal complex containing the excised intron, U2, U5 and U6 snRNPs, and splicing factors. Interacts with TUFT1. Interacts with DHX15; indicative for a recruitment of DHX15 to the IL complex. Interacts with GCFC2.

It localises to the cytoplasm. It is found in the nucleus. Its function is as follows. Involved in pre-mRNA splicing, specifically in spliceosome disassembly during late-stage splicing events. Intron turnover seems to proceed through reactions in two lariat-intron associated complexes termed Intron Large (IL) and Intron Small (IS). In cooperation with DHX15 seems to mediate the transition of the U2, U5 and U6 snRNP-containing IL complex to the snRNP-free IS complex leading to efficient debranching and turnover of excised introns. May play a role in the differentiation of ameloblasts and odontoblasts or in the forming of the enamel extracellular matrix. This Macaca mulatta (Rhesus macaque) protein is Tuftelin-interacting protein 11 (TFIP11).